Here is a 98-residue protein sequence, read N- to C-terminus: NADH-ubiquinone oxidoreductase chain 4L (98 aa).

3 consecutive transmembrane segments (helical) span residues 1 to 21 (MSMV…GLLI), 30 to 50 (LLCL…TILT), and 61 to 81 (IILL…LVMI).

The protein belongs to the complex I subunit 4L family. Core subunit of respiratory chain NADH dehydrogenase (Complex I) which is composed of 45 different subunits.

Its subcellular location is the mitochondrion inner membrane. The enzyme catalyses a ubiquinone + NADH + 5 H(+)(in) = a ubiquinol + NAD(+) + 4 H(+)(out). Core subunit of the mitochondrial membrane respiratory chain NADH dehydrogenase (Complex I) which catalyzes electron transfer from NADH through the respiratory chain, using ubiquinone as an electron acceptor. Part of the enzyme membrane arm which is embedded in the lipid bilayer and involved in proton translocation. The sequence is that of NADH-ubiquinone oxidoreductase chain 4L (MT-ND4L) from Gulo gulo (Wolverine).